The sequence spans 397 residues: T-box transcription factor TBX19 (397 aa).

Positions 48-216 (LWQRFREVTN…YNPFAKAFLD (169 aa)) form a DNA-binding region, T-box. Residues 220–248 (RNHPKDAPEAASEGQHMTYSHSPQAPHGC) form a disordered region.

It is found in the nucleus. Functionally, may be involved in the initial formation of the chordamesoderm. This is T-box transcription factor TBX19 from Gallus gallus (Chicken).